Reading from the N-terminus, the 408-residue chain is 1-deoxy-D-xylulose 5-phosphate reductoisomerase (408 aa).

NADPH-binding residues include Thr19, Gly20, Ser21, Ile22, Gly45, Asn47, and Asn130. Lys131 contributes to the 1-deoxy-D-xylulose 5-phosphate binding site. Residue Glu132 coordinates NADPH. Mn(2+) is bound at residue Asp156. The 1-deoxy-D-xylulose 5-phosphate site is built by Ser157, Glu158, Ser182, and His205. A Mn(2+)-binding site is contributed by Glu158. Gly211 is an NADPH binding site. 1-deoxy-D-xylulose 5-phosphate is bound by residues Ser218, Asn223, Lys224, and Glu227. Glu227 serves as a coordination point for Mn(2+).

This sequence belongs to the DXR family. Requires Mg(2+) as cofactor. The cofactor is Mn(2+).

The enzyme catalyses 2-C-methyl-D-erythritol 4-phosphate + NADP(+) = 1-deoxy-D-xylulose 5-phosphate + NADPH + H(+). Its pathway is isoprenoid biosynthesis; isopentenyl diphosphate biosynthesis via DXP pathway; isopentenyl diphosphate from 1-deoxy-D-xylulose 5-phosphate: step 1/6. In terms of biological role, catalyzes the NADPH-dependent rearrangement and reduction of 1-deoxy-D-xylulose-5-phosphate (DXP) to 2-C-methyl-D-erythritol 4-phosphate (MEP). The polypeptide is 1-deoxy-D-xylulose 5-phosphate reductoisomerase (Gluconobacter oxydans (strain 621H) (Gluconobacter suboxydans)).